Reading from the N-terminus, the 1187-residue chain is Protein WWC2 (1187 aa).

WW domains lie at 10-43 and 57-90; these read LPLP…DPRD and DELP…DPRK. Coiled-coil stretches lie at residues 121–194 and 224–256; these read KEQR…YKQQ and ELKS…FHLD. Serine 286 carries the post-translational modification Phosphoserine. Residues 302–423 are a coiled coil; that stretch reads LAEKVRLSLQ…EETTKLTTSL (122 aa). A disordered region spans residues 438 to 464; that stretch reads SSGSSLGSLASSRGSLNTSSRGSLNSL. The region spanning 697-820 is the C2 domain; that stretch reads ETAQVQIGLR…FSNEIFMLWY (124 aa). Disordered regions lie at residues 830 to 849 and 874 to 963; these read CKKN…QPML and ELAQ…ETNT. Residues 859-885 are a coiled coil; it reads ALLARTSAELLAVEQELAQEEEEEELR. Acidic residues predominate over residues 875-884; it reads LAQEEEEEEL. Residue threonine 999 is modified to Phosphothreonine. Residue serine 1017 is modified to Phosphoserine. Residues 1026–1045 are interaction with PRKCZ; it reads SLFVRNSTERRSLRVKRAVC. A coiled-coil region spans residues 1063-1143; sequence DLELDLQASL…DLNAERLMRQ (81 aa).

This sequence belongs to the WWC family. Forms homodimers and heterodimers with WWC1 and WWC3. Interacts with DLC1 and PRKCZ. Interacts (via WW domains) with LATS1 and LATS2.

The protein resides in the cytoplasm. It is found in the cytosol. Functionally, regulator of the Hippo signaling pathway, also known as the Salvador-Warts-Hippo (SWH) pathway. Enhances phosphorylation of LATS1 and YAP1 and negatively regulates cell proliferation and organ growth due to a suppression of the transcriptional activity of YAP1, the major effector of the Hippo pathway. The polypeptide is Protein WWC2 (Wwc2) (Mus musculus (Mouse)).